Reading from the N-terminus, the 1600-residue chain is E3 ubiquitin-protein ligase listerin (1600 aa).

11 HEAT repeats span residues 31-65 (SSVP…CVKK), 114-150 (KTLP…DSDQ), 161-202 (GKLL…SSMA), 245-288 (YQLV…DLLR), 291-344 (ISVT…PDYA), 526-606 (RNYK…AALS), 853-904 (YTTN…DIRT), 962-986 (YASK…GAKF), 1045-1083 (LYNV…WVQT), 1289-1324 (VDVR…KADN), and 1325-1369 (SLNA…EEGT). The segment at 1537–1583 (CPICYAVVSADKKLPDKRCSTCNNLFHRLCLYKWFQNSNKNTCPLCR) adopts an RING-type; degenerate zinc-finger fold.

This sequence belongs to the LTN1 family. As to quaternary structure, component of the ribosome quality control complex (RQC), composed of the E3 ubiquitin ligase RKR1/LTN1, RQC1 and RQC2, as well as CDC48 and its ubiquitin-binding cofactors associated with the 60S ribosomal subunits.

It is found in the nucleus. The protein localises to the cytoplasm. It localises to the cytosol. The enzyme catalyses S-ubiquitinyl-[E2 ubiquitin-conjugating enzyme]-L-cysteine + [acceptor protein]-L-lysine = [E2 ubiquitin-conjugating enzyme]-L-cysteine + N(6)-ubiquitinyl-[acceptor protein]-L-lysine.. Its pathway is protein modification; protein ubiquitination. Its function is as follows. E3 ubiquitin-protein ligase component of the ribosome quality control complex (RQC), a ribosome-associated complex that mediates ubiquitination and extraction of incompletely synthesized nascent chains for proteasomal degradation. Mediates ubiquitination of proteins derived from mRNAs lacking stop codons (non-stop proteins) and other translation arrest products induced by poly-lysine sequences and tandem rare codons. Ubiquitination leads to CDC48 recruitment for extraction and degradation of the incomplete translation product. May indirectly play a role in chromatin function and transcription. This is E3 ubiquitin-protein ligase listerin (rkr-1) from Neurospora crassa (strain ATCC 24698 / 74-OR23-1A / CBS 708.71 / DSM 1257 / FGSC 987).